Reading from the N-terminus, the 112-residue chain is UPF0342 protein STER_0693 (112 aa).

It belongs to the UPF0342 family.

In Streptococcus thermophilus (strain ATCC BAA-491 / LMD-9), this protein is UPF0342 protein STER_0693.